A 274-amino-acid polypeptide reads, in one-letter code: NADPH-dependent 7-cyano-7-deazaguanine reductase (274 aa).

Val80–Ser82 lines the substrate pocket. An NADPH-binding site is contributed by Ser82–Lys83. Cys181 (thioimide intermediate) is an active-site residue. Asp188 serves as the catalytic Proton donor. A substrate-binding site is contributed by His220–Glu221. Arg249–Gly250 lines the NADPH pocket.

Belongs to the GTP cyclohydrolase I family. QueF type 2 subfamily. As to quaternary structure, homodimer.

The protein localises to the cytoplasm. The enzyme catalyses 7-aminomethyl-7-carbaguanine + 2 NADP(+) = 7-cyano-7-deazaguanine + 2 NADPH + 3 H(+). It functions in the pathway tRNA modification; tRNA-queuosine biosynthesis. In terms of biological role, catalyzes the NADPH-dependent reduction of 7-cyano-7-deazaguanine (preQ0) to 7-aminomethyl-7-deazaguanine (preQ1). The chain is NADPH-dependent 7-cyano-7-deazaguanine reductase from Paraburkholderia xenovorans (strain LB400).